Reading from the N-terminus, the 132-residue chain is Small ribosomal subunit protein uS8 (132 aa).

This sequence belongs to the universal ribosomal protein uS8 family. In terms of assembly, part of the 30S ribosomal subunit. Contacts proteins S5 and S12.

One of the primary rRNA binding proteins, it binds directly to 16S rRNA central domain where it helps coordinate assembly of the platform of the 30S subunit. The sequence is that of Small ribosomal subunit protein uS8 from Xanthomonas axonopodis pv. citri (strain 306).